Here is a 566-residue protein sequence, read N- to C-terminus: CTP synthase (566 aa).

The segment at 1–282 is amidoligase domain; it reads MSIKRAQLGG…DAYIIDQLGL (282 aa). Ser23 lines the CTP pocket. Ser23 contacts UTP. ATP is bound by residues 24 to 29 and Asp81; that span reads SLGKGL. 2 residues coordinate Mg(2+): Asp81 and Glu156. Residues 163 to 165, 203 to 208, and Lys239 contribute to the CTP site; these read DIE and KTKPTQ. UTP-binding positions include 203–208 and Lys239; that span reads KTKPTQ. The 249-residue stretch at 308-556 folds into the Glutamine amidotransferase type-1 domain; the sequence is TIGLVGKYID…IGAALDRQKA (249 aa). Position 371 (Gly371) interacts with L-glutamine. Residue Cys398 is the Nucleophile; for glutamine hydrolysis of the active site. Residues 399 to 402, Glu422, and Arg482 each bind L-glutamine; that span reads LGLQ. Residues His529 and Glu531 contribute to the active site.

It belongs to the CTP synthase family. Homotetramer.

The catalysed reaction is UTP + L-glutamine + ATP + H2O = CTP + L-glutamate + ADP + phosphate + 2 H(+). It catalyses the reaction L-glutamine + H2O = L-glutamate + NH4(+). The enzyme catalyses UTP + NH4(+) + ATP = CTP + ADP + phosphate + 2 H(+). It participates in pyrimidine metabolism; CTP biosynthesis via de novo pathway; CTP from UDP: step 2/2. Its activity is regulated as follows. Allosterically activated by GTP, when glutamine is the substrate; GTP has no effect on the reaction when ammonia is the substrate. The allosteric effector GTP functions by stabilizing the protein conformation that binds the tetrahedral intermediate(s) formed during glutamine hydrolysis. Inhibited by the product CTP, via allosteric rather than competitive inhibition. In terms of biological role, catalyzes the ATP-dependent amination of UTP to CTP with either L-glutamine or ammonia as the source of nitrogen. Regulates intracellular CTP levels through interactions with the four ribonucleotide triphosphates. This chain is CTP synthase, found in Leifsonia xyli subsp. xyli (strain CTCB07).